Consider the following 916-residue polypeptide: Inter-alpha-trypsin inhibitor heavy chain H4 (916 aa).

An N-terminal signal peptide occupies residues 1-27 (MKTPAPGRIHSIVLVLLSLAVLQTSKA). The 122-residue stretch at 28-149 (QKVQNDIDIY…KVTFELVYEE (122 aa)) folds into the VIT domain. N-linked (GlcNAc...) asparagine glycosylation is found at N82 and N208. The region spanning 275-458 (NVIFVIDKSG…LQLQDFYQEV (184 aa)) is the VWFA domain. N518 is a glycosylation site (N-linked (GlcNAc...) asparagine). Disordered stretches follow at residues 597 to 616 (PEGQEQSQVAEKPVEDESRG) and 678 to 701 (PLAPASAPSPTSGPGGASHDTDFR). Residues 678–689 (PLAPASAPSPTS) are compositionally biased toward low complexity. S683 is a glycosylation site (O-linked (GalNAc...) serine). 3 O-linked (GalNAc...) threonine glycosylation sites follow: T705, T706, and T708. C733 and C911 are oxidised to a cystine.

The protein belongs to the ITIH family. In terms of assembly, interacts (via C-terminus) with DNAJC1 (via SANT 2 domain). In terms of processing, appears to be both N- and O-glycosylated.

The protein localises to the secreted. Functionally, type II acute-phase protein (APP) involved in inflammatory responses to trauma. May also play a role in liver development or regeneration. The polypeptide is Inter-alpha-trypsin inhibitor heavy chain H4 (ITIH4) (Bos taurus (Bovine)).